A 583-amino-acid polypeptide reads, in one-letter code: Immunity-related GTPase family Q protein (583 aa).

Cys152 and Cys158 are oxidised to a cystine. Positions 155–179 form a coiled coil; sequence SDRCEELERLQVVLRTQAEALQRLL. The LIR 1 motif lies at 186–189; it reads FEVL. A Phosphothreonine modification is found at Thr203. An IRG-type G domain is found at 223–409; the sequence is ARLDLAVAGT…PGLGTWLQHA (187 aa). The interval 322-373 is disordered; that stretch reads APLVGVRTDGQGEDPPEVLEEEKAQNASDGNSGDARSEGKKAGIGDSGCTAA. Acidic residues predominate over residues 332–341; the sequence is QGEDPPEVLE. The LIR 2 signature appears at 381–384; the sequence is WEVL.

It belongs to the TRAFAC class dynamin-like GTPase superfamily. IRG family. Interacts (via LIR motif 1) with GABARAPL2. Interacts (via LIR motif 2) with MAP1LC3B/LC3B.

Its subcellular location is the lysosome. It is found in the cytoplasmic vesicle. The protein localises to the autophagosome. In terms of biological role, autophagy receptor that specifically promotes clearance of misfolded MHC class I molecules by targeting them to the lysosome for degradation. Acts as a molecular adapter that specifically recognizes and binds (1) misfolded MHC class I molecules following their ubiquitination, as well as (2) autophagy-related proteins, promoting the recruitment of misfolded MHC class I molecules to autophagy machinery for degradation. Degradation of misfolded MHC class I molecules is essential to prevent accumulation of defective MHC class I complexes at the surface of CD8(+) T-cells and prevent a stronger T-cell-mediated response. In contrast to other members of the family, does not show GTPase activity. This is Immunity-related GTPase family Q protein (Irgq) from Mus musculus (Mouse).